We begin with the raw amino-acid sequence, 310 residues long: MILTLTLNPSVDISYPLTALKLDDVNRVQEVSKTAGGKGLNVTRVLAQVGEPVLASGFIGGELGQFIAKKLDHADIKHAFYNIKGETRNCIAILHEGQQTEILEQGPEIDNQEAAGFIKHFEQLLEKVEAVAISGSLPKGLNQDYYAQIIERCQNKGVPVILDCSGATLQTVLENPYKPTVIKPNISELYQLLNQPLDESLESLKQAVSQPLFEGIEWIIVSLGAQGAFAKHNHTFYRVNIPTINVLNPVGSGDSTVAGITSAILNHENDHDLLKKANTLGMLNAQEAQTGYVNLNNYDELFNQIEVLEV.

The protein belongs to the carbohydrate kinase PfkB family. LacC subfamily.

The enzyme catalyses D-tagatofuranose 6-phosphate + ATP = D-tagatofuranose 1,6-bisphosphate + ADP + H(+). It participates in carbohydrate metabolism; D-tagatose 6-phosphate degradation; D-glyceraldehyde 3-phosphate and glycerone phosphate from D-tagatose 6-phosphate: step 1/2. The chain is Tagatose-6-phosphate kinase from Staphylococcus aureus (strain Mu3 / ATCC 700698).